Reading from the N-terminus, the 426-residue chain is UPF0229 protein Csal_0882 (426 aa).

Basic and acidic residues predominate over residues 82–93; that stretch reads FVEGDRLRRPGG. Positions 82-109 are disordered; that stretch reads FVEGDRLRRPGGEGRGGSGEGSASNQGE.

Belongs to the UPF0229 family.

This Chromohalobacter salexigens (strain ATCC BAA-138 / DSM 3043 / CIP 106854 / NCIMB 13768 / 1H11) protein is UPF0229 protein Csal_0882.